The chain runs to 2282 residues: Ectopic P granules protein 5 homolog (2282 aa).

Belongs to the EPG5 family.

In terms of biological role, involved in autophagy. In Aedes aegypti (Yellowfever mosquito), this protein is Ectopic P granules protein 5 homolog.